A 207-amino-acid polypeptide reads, in one-letter code: uncharacterized protein (207 aa).

This is an uncharacterized protein from Rhizobium meliloti (Ensifer meliloti).